A 138-amino-acid chain; its full sequence is Small ribosomal subunit protein uS11 (138 aa).

The span at 1 to 12 (MPPAKKAAAAPK) shows a compositional bias: low complexity. The segment at 1 to 27 (MPPAKKAAAAPKKGQKTRRREKKNVPH) is disordered. Over residues 13–22 (KGQKTRRREK) the composition is skewed to basic residues.

It belongs to the universal ribosomal protein uS11 family. In terms of assembly, part of the 30S ribosomal subunit. Interacts with proteins S7 and S18. Binds to IF-3.

Its function is as follows. Located on the platform of the 30S subunit, it bridges several disparate RNA helices of the 16S rRNA. Forms part of the Shine-Dalgarno cleft in the 70S ribosome. This chain is Small ribosomal subunit protein uS11, found in Mycolicibacterium paratuberculosis (strain ATCC BAA-968 / K-10) (Mycobacterium paratuberculosis).